The following is a 228-amino-acid chain: Lipoprotein-releasing system ATP-binding protein LolD (228 aa).

Residues 6–228 (LRLSGIEKTY…LSDGRLSAES (223 aa)) form the ABC transporter domain. 43-50 (APSGAGKS) is an ATP binding site.

This sequence belongs to the ABC transporter superfamily. Lipoprotein translocase (TC 3.A.1.125) family. As to quaternary structure, the complex is composed of two ATP-binding proteins (LolD) and two transmembrane proteins (LolC and LolE).

Its subcellular location is the cell inner membrane. In terms of biological role, part of the ABC transporter complex LolCDE involved in the translocation of mature outer membrane-directed lipoproteins, from the inner membrane to the periplasmic chaperone, LolA. Responsible for the formation of the LolA-lipoprotein complex in an ATP-dependent manner. The chain is Lipoprotein-releasing system ATP-binding protein LolD from Ruegeria pomeroyi (strain ATCC 700808 / DSM 15171 / DSS-3) (Silicibacter pomeroyi).